A 451-amino-acid polypeptide reads, in one-letter code: NADH-quinone oxidoreductase subunit D (451 aa).

It belongs to the complex I 49 kDa subunit family. In terms of assembly, NDH-1 is composed of 14 different subunits. Subunits NuoB, C, D, E, F, and G constitute the peripheral sector of the complex.

It localises to the cell inner membrane. It carries out the reaction a quinone + NADH + 5 H(+)(in) = a quinol + NAD(+) + 4 H(+)(out). NDH-1 shuttles electrons from NADH, via FMN and iron-sulfur (Fe-S) centers, to quinones in the respiratory chain. The immediate electron acceptor for the enzyme in this species is believed to be a menaquinone. Couples the redox reaction to proton translocation (for every two electrons transferred, four hydrogen ions are translocated across the cytoplasmic membrane), and thus conserves the redox energy in a proton gradient. This chain is NADH-quinone oxidoreductase subunit D, found in Salinibacter ruber (strain DSM 13855 / M31).